Reading from the N-terminus, the 312-residue chain is Taste receptor type 2 member 135 (312 aa).

At 1-19 (MSTGHTVLGCQTTDKTVVT) the chain is on the extracellular side. A helical transmembrane segment spans residues 20 to 40 (LFIILVLLCLVAVVGNGFIII). The Cytoplasmic segment spans residues 41–66 (ALGMKWLLRRTLSAHNKLLISLAASR). A helical transmembrane segment spans residues 67-87 (FCLQCVVIGKNIYVFLNPTSF). Over 88–97 (PYNPVIQLLN) the chain is Extracellular. The helical transmembrane segment at 98–118 (LMWDFLTAATIWLCSLLGFFY) threads the bilayer. Residues 119-140 (CVKIATLTHPVFVWLKYRLPGW) lie on the Cytoplasmic side of the membrane. A helical transmembrane segment spans residues 141-161 (VPWMLLSAVGMSSLTSILCFI). Residues 162–198 (GNYMIYQNHAKSGHQPWNVTGNSLRHSLEKFYFFSIK) are Extracellular-facing. Residue Asn179 is glycosylated (N-linked (GlcNAc...) asparagine). The chain crosses the membrane as a helical span at residues 199 to 219 (IIMWTIPTVVFSIFMSLLLVS). Residues 220-244 (LVRHMKKTFLALSELRDVWAQAHFK) are Cytoplasmic-facing. Residues 245–265 (ALLPLLSFIVLFISCFLTLVL) traverse the membrane as a helical segment. Topologically, residues 266 to 277 (SSASNTPYQEFR) are extracellular. The chain crosses the membrane as a helical span at residues 278–298 (YWMWQVVIHLCTVIHPIVILF). The Cytoplasmic portion of the chain corresponds to 299 to 312 (SNPVLRVVIKRGCC).

This sequence belongs to the G-protein coupled receptor T2R family.

It localises to the membrane. Putative taste receptor which may play a role in the perception of bitterness. In Mus musculus (Mouse), this protein is Taste receptor type 2 member 135 (Tas2r135).